A 116-amino-acid chain; its full sequence is Antimicrobial peptide 1b (116 aa).

Residues 1–34 form the signal peptide; that stretch reads MKPHMSATVLRAPRVAAILLAVVLAAVLATAVNG. The Chitin-binding type-1 domain maps to 35-77; it reads AQRCGDQARGAKCPNCLCCGKYGFCGSGDAYCGAGSCQSQCRG. Cystine bridges form between cysteine 38/cysteine 53, cysteine 47/cysteine 59, cysteine 50/cysteine 78, cysteine 52/cysteine 66, and cysteine 71/cysteine 75. Residues 80-116 constitute a propeptide that is removed on maturation; that stretch reads DDVVGQALPAEPGSTRATAASSASARGLNLTATTGGP. The segment at 89–116 is disordered; that stretch reads AEPGSTRATAASSASARGLNLTATTGGP. Residues 93–105 show a composition bias toward low complexity; it reads STRATAASSASAR.

Functionally, binds chitin. Has antifungal activity against the fungi F.solani (IC(50)=5 ug/ml), F.verticillioides (IC(50)=30 ug/ml), F.oxysporum (IC(50)=5 ug/ml), B.sorokiniana (IC(50)=5 ug/ml), B.cinerea (IC(50)=20 ug/ml) and N.crassa (IC(50)=10 ug/ml). Inhibits hyphal elongation and causes browning of hyphae in F.oxysporum. Causes destruction and discoloration of spores in B.sorokiniana. Inhibits the development of disease caused by the fungus P.infestans on potato tubers. Has antibacterial activity against the Gram-negative bacteria P.syringae and E.carotovora, and the Gram-positive bacterium C.michiganensis. In terms of biological role, has antifungal activity against F.verticillioides (IC(50)=2.7 ug/ml). At concentrations between 45 uM and 225 uM, inhibits activity of metalloproteinase fungalysin Fv-cpm from F.verticillioides. The chain is Antimicrobial peptide 1b from Triticum kiharae (Wheat).